We begin with the raw amino-acid sequence, 202 residues long: Transcription factor IBH1 (202 aa).

Pro residues predominate over residues 1 to 16 (MDAKRTPPPPTPPNPN). Residues 1–33 (MDAKRTPPPPTPPNPNPSVIGSGAAADGGGFGR) form a disordered region. Residues 136 to 185 (TSAAARAVPPPPRQQGEPPRADALRRLVPGGAGMEYSSLLEETADYLRSL) form the bHLH domain.

This sequence belongs to the bHLH protein family. Interacts with ILI1.

Functionally, atypical and probable non DNA-binding bHLH transcription factor that acts as a negative regulator of cell elongation and plant development. Binds the transcription factor ILI1 and forms a heterodimer of antagonistic bHLH transcription factors that function downstream of BZR1 to mediate brassinosteroid regulation of cell elongation and lamina inclination. This is Transcription factor IBH1 (IBH1) from Oryza sativa subsp. indica (Rice).